We begin with the raw amino-acid sequence, 262 residues long: Global transcriptional regulator CodY (262 aa).

Positions 1-159 are GAF domain; sequence MAHLLEKTRK…ASTVVGIQLL (159 aa). Positions 207–226 form a DNA-binding region, H-T-H motif; sequence ASVIADRIGITRSVIVNALR.

It belongs to the CodY family.

Its subcellular location is the cytoplasm. Functionally, DNA-binding global transcriptional regulator which is involved in the adaptive response to starvation and acts by directly or indirectly controlling the expression of numerous genes in response to nutrient availability. During rapid exponential growth, CodY is highly active and represses genes whose products allow adaptation to nutrient depletion. The sequence is that of Global transcriptional regulator CodY from Streptococcus pneumoniae serotype 4 (strain ATCC BAA-334 / TIGR4).